A 645-amino-acid chain; its full sequence is Lipase 1 (645 aa).

Positions 1–24 are cleaved as a signal peptide; that stretch reads MKRSFIFAPGMLALSISAISNAHA. The Nucleophile role is filled by Ser34. Catalysis depends on residues Asp327 and His330. One can recognise an Autotransporter domain in the interval 383–645; it reads NEQGKLGVFG…SFSLGVNASF (263 aa).

It belongs to the 'GDSL' lipolytic enzyme family.

It is found in the secreted. It catalyses the reaction a triacylglycerol + H2O = a diacylglycerol + a fatty acid + H(+). This is Lipase 1 (lip-1) from Photorhabdus luminescens (Xenorhabdus luminescens).